The chain runs to 284 residues: Ribose-phosphate pyrophosphokinase 1 (284 aa).

ATP is bound at residue 34–36 (DGE). His126 and Asp163 together coordinate Mg(2+). Lys186 is an active-site residue. D-ribose 5-phosphate-binding positions include Arg188, Asp211, and 215–219 (STGGT).

The protein belongs to the ribose-phosphate pyrophosphokinase family. Class III (archaeal) subfamily. It depends on Mg(2+) as a cofactor.

The protein localises to the cytoplasm. It catalyses the reaction D-ribose 5-phosphate + ATP = 5-phospho-alpha-D-ribose 1-diphosphate + AMP + H(+). It participates in metabolic intermediate biosynthesis; 5-phospho-alpha-D-ribose 1-diphosphate biosynthesis; 5-phospho-alpha-D-ribose 1-diphosphate from D-ribose 5-phosphate (route I): step 1/1. Involved in the biosynthesis of the central metabolite phospho-alpha-D-ribosyl-1-pyrophosphate (PRPP) via the transfer of pyrophosphoryl group from ATP to 1-hydroxyl of ribose-5-phosphate (Rib-5-P). The protein is Ribose-phosphate pyrophosphokinase 1 of Archaeoglobus fulgidus (strain ATCC 49558 / DSM 4304 / JCM 9628 / NBRC 100126 / VC-16).